The primary structure comprises 41 residues: Photosystem II reaction center protein L (41 aa).

The chain crosses the membrane as a helical span at residues 20–40 (SLYLGLLLVFVVGILFSSYFF).

The protein belongs to the PsbL family. As to quaternary structure, PSII is composed of 1 copy each of membrane proteins PsbA, PsbB, PsbC, PsbD, PsbE, PsbF, PsbH, PsbI, PsbJ, PsbK, PsbL, PsbM, PsbT, PsbX, PsbY, PsbZ, Psb30/Ycf12, peripheral proteins PsbO, CyanoQ (PsbQ), PsbU, PsbV and a large number of cofactors. It forms dimeric complexes.

The protein localises to the cellular thylakoid membrane. Functionally, one of the components of the core complex of photosystem II (PSII). PSII is a light-driven water:plastoquinone oxidoreductase that uses light energy to abstract electrons from H(2)O, generating O(2) and a proton gradient subsequently used for ATP formation. It consists of a core antenna complex that captures photons, and an electron transfer chain that converts photonic excitation into a charge separation. This subunit is found at the monomer-monomer interface and is required for correct PSII assembly and/or dimerization. The protein is Photosystem II reaction center protein L of Trichodesmium erythraeum (strain IMS101).